The primary structure comprises 355 residues: MASKDQHLQQKVKHTLEAIPSPRYAPLRVPLRRRLQTLAVLLWCSMMSICMFIFFFLCSIPVLLWFPIILYLTWILVWDKAPENGGRPIRWLRNAAWWKLFAGYFPAHVIKEADLDPSKNYIFGYHPHGIISMGSFCTFSTNATGFDDLFPGIRPSLLTLTSNFNIPLYRDYLMACGLCSVSKTSCQNILTKGGPGRSIAIVVGGASESLNARPGVMDLVLKRRFGFIKIAVQTGASLVPTISFGENELYEQIESNENSKLHRWQKKIQHALGFTMPLFHGRGVFNYDFGLLPHRHPIYTIVGKPIPVPSIKYGQTKDEIIRELHDSYMHAVQDLYDRYKDIYAKDRVKELEFVE.

The next 2 membrane-spanning stretches (helical) occupy residues 41-61 and 62-78; these read LLWC…CSIP and VLLW…ILVW. Asparagine 142 carries an N-linked (GlcNAc...) asparagine glycan.

This sequence belongs to the diacylglycerol acyltransferase family.

The protein localises to the endoplasmic reticulum membrane. It catalyses the reaction an acyl-CoA + a 1,2-diacyl-sn-glycerol = a triacyl-sn-glycerol + CoA. It functions in the pathway glycerolipid metabolism; triacylglycerol biosynthesis. Functionally, catalyzes the terminal and only committed step in triacylglycerol synthesis by using diacylglycerol and fatty acyl CoA as substrates. Required for storage lipid synthesis. This chain is Diacylglycerol O-acyltransferase 2A (DGAT2A), found in Umbelopsis ramanniana (Oleaginous fungus).